A 403-amino-acid polypeptide reads, in one-letter code: Nuclear receptor subfamily 2 group F member 5 (403 aa).

Residues 16–44 are disordered; that stretch reads PGSQLQMCSQEPGGTPGTPSGSTPGNDAL. A DNA-binding region (nuclear receptor) is located at residues 51 to 126; that stretch reads NVDCMVCGDK…VGMRREAVQR (76 aa). 2 consecutive NR C4-type zinc fingers follow at residues 54–74 and 90–114; these read CMVC…CEGC and CRGN…LKKC. The region spanning 152–378 is the NR LBD domain; that stretch reads YLSGFISLLL…TLLRDMLLSG (227 aa).

Belongs to the nuclear hormone receptor family. NR2 subfamily.

It is found in the nucleus. Functionally, putative receptor that is required in photoreceptor cells precursors during eye development. The polypeptide is Nuclear receptor subfamily 2 group F member 5 (nr2f5) (Danio rerio (Zebrafish)).